Here is a 98-residue protein sequence, read N- to C-terminus: MDCCASRGCSVPTGPATTICSSDKSCRCGVCLPSTCPHTVWLLEPTCCDNCPPPCHIPQPCVPTCFLLNSCQPTPGLETLNLTTFTQPCCEPCLPRGC.

3 consecutive repeat copies span residues 3-7 (CCASR), 47-51 (CCDNC), and 89-93 (CCEPC). A 3 X 5 AA repeats of C-C-X(3) region spans residues 3–59 (CCASRGCSVPTGPATTICSSDKSCRCGVCLPSTCPHTVWLLEPTCCDNCPPPCHIPQ).

It belongs to the KRTAP type 3 family. In terms of assembly, interacts with hair keratins. In terms of tissue distribution, localized to the upper cortex of the hair shaft.

Functionally, in the hair cortex, hair keratin intermediate filaments are embedded in an interfilamentous matrix, consisting of hair keratin-associated proteins (KRTAP), which are essential for the formation of a rigid and resistant hair shaft through their extensive disulfide bond cross-linking with abundant cysteine residues of hair keratins. The matrix proteins include the high-sulfur and high-glycine-tyrosine keratins. This Homo sapiens (Human) protein is Keratin-associated protein 3-3 (KRTAP3-3).